Reading from the N-terminus, the 179-residue chain is GTP-dependent dephospho-CoA kinase (179 aa).

GTP contacts are provided by Asp-55, Val-57, Asp-74, Lys-76, and Glu-128.

It belongs to the GTP-dependent DPCK family.

The catalysed reaction is 3'-dephospho-CoA + GTP = GDP + CoA + H(+). It functions in the pathway cofactor biosynthesis; coenzyme A biosynthesis. Catalyzes the GTP-dependent phosphorylation of the 3'-hydroxyl group of dephosphocoenzyme A to form coenzyme A (CoA). The polypeptide is GTP-dependent dephospho-CoA kinase (Saccharolobus solfataricus (strain ATCC 35092 / DSM 1617 / JCM 11322 / P2) (Sulfolobus solfataricus)).